Consider the following 315-residue polypeptide: Homoserine kinase (315 aa).

97 to 107 (PPARGLGSSAT) is a binding site for ATP.

This sequence belongs to the GHMP kinase family. Homoserine kinase subfamily.

The protein resides in the cytoplasm. The enzyme catalyses L-homoserine + ATP = O-phospho-L-homoserine + ADP + H(+). It participates in amino-acid biosynthesis; L-threonine biosynthesis; L-threonine from L-aspartate: step 4/5. Functionally, catalyzes the ATP-dependent phosphorylation of L-homoserine to L-homoserine phosphate. In Parasynechococcus marenigrum (strain WH8102), this protein is Homoserine kinase.